The following is a 109-amino-acid chain: MFGKGGLGGLMKQAQQMQERMQKMQDEIAQLEVTGESGAGLVKITLNGAHNCRRIEIDPSLMEEDKEMLEDLIAAAFNDAVRRAEEMQKEKMASVTAGMSLPPGFKMPF.

The segment at 1–23 is disordered; it reads MFGKGGLGGLMKQAQQMQERMQK.

This sequence belongs to the YbaB/EbfC family. As to quaternary structure, homodimer.

The protein localises to the cytoplasm. It is found in the nucleoid. In terms of biological role, binds to DNA and alters its conformation. May be involved in regulation of gene expression, nucleoid organization and DNA protection. This Actinobacillus succinogenes (strain ATCC 55618 / DSM 22257 / CCUG 43843 / 130Z) protein is Nucleoid-associated protein Asuc_0997.